A 415-amino-acid polypeptide reads, in one-letter code: Gamma-glutamyl phosphate reductase (415 aa).

This sequence belongs to the gamma-glutamyl phosphate reductase family.

It localises to the cytoplasm. The catalysed reaction is L-glutamate 5-semialdehyde + phosphate + NADP(+) = L-glutamyl 5-phosphate + NADPH + H(+). It participates in amino-acid biosynthesis; L-proline biosynthesis; L-glutamate 5-semialdehyde from L-glutamate: step 2/2. Catalyzes the NADPH-dependent reduction of L-glutamate 5-phosphate into L-glutamate 5-semialdehyde and phosphate. The product spontaneously undergoes cyclization to form 1-pyrroline-5-carboxylate. The polypeptide is Gamma-glutamyl phosphate reductase (Bacillus thuringiensis subsp. konkukian (strain 97-27)).